The chain runs to 23 residues: Acidic phospholipase A2 CHA-E6b (23 aa).

It belongs to the phospholipase A2 family. Group II subfamily. D49 sub-subfamily. Ca(2+) serves as cofactor. Contains 7 disulfide bonds. As to expression, expressed by the venom gland.

It localises to the secreted. It catalyses the reaction a 1,2-diacyl-sn-glycero-3-phosphocholine + H2O = a 1-acyl-sn-glycero-3-phosphocholine + a fatty acid + H(+). Snake venom phospholipase A2 (PLA2) that shows high lipolytic (1200 umol/mg/min) and weak ADP-induced platelet aggregation activities. Also shows weak anticoagulant activity (IC(50) of about 1.0 uM). PLA2 catalyzes the calcium-dependent hydrolysis of the 2-acyl groups in 3-sn-phosphoglycerides. The protein is Acidic phospholipase A2 CHA-E6b of Crotalus horridus (Timber rattlesnake).